A 464-amino-acid chain; its full sequence is tRNA modification GTPase MnmE (464 aa).

Arg-26, Glu-92, and Arg-131 together coordinate (6S)-5-formyl-5,6,7,8-tetrahydrofolate. The TrmE-type G domain occupies 227-385; it reads GIKVAILGRV…LISALKDYVS (159 aa). Asn-237 contributes to the K(+) binding site. GTP is bound by residues 237 to 242, 256 to 262, and 281 to 284; these read NAGKSS, SNIAGTT, and DTAG. Position 241 (Ser-241) interacts with Mg(2+). Residues Ser-256, Ile-258, and Thr-261 each coordinate K(+). Thr-262 contributes to the Mg(2+) binding site. Lys-464 contacts (6S)-5-formyl-5,6,7,8-tetrahydrofolate.

Belongs to the TRAFAC class TrmE-Era-EngA-EngB-Septin-like GTPase superfamily. TrmE GTPase family. As to quaternary structure, homodimer. Heterotetramer of two MnmE and two MnmG subunits. K(+) is required as a cofactor.

The protein localises to the cytoplasm. Exhibits a very high intrinsic GTPase hydrolysis rate. Involved in the addition of a carboxymethylaminomethyl (cmnm) group at the wobble position (U34) of certain tRNAs, forming tRNA-cmnm(5)s(2)U34. The polypeptide is tRNA modification GTPase MnmE (Brachyspira hyodysenteriae (strain ATCC 49526 / WA1)).